The sequence spans 55 residues: Locustin (55 aa).

4 cysteine pairs are disulfide-bonded: Cys-5–Cys-40, Cys-7–Cys-36, Cys-10–Cys-32, and Cys-17–Cys-54.

In terms of assembly, monomer. Stored in hemocyte granules and secreted into the hemolymph.

Its subcellular location is the secreted. Has antibacterial activity against Gram-positive bacterium M.luteus. This Locusta migratoria (Migratory locust) protein is Locustin.